Reading from the N-terminus, the 64-residue chain is Large ribosomal subunit protein bL33 (64 aa).

Basic and acidic residues-rich tracts occupy residues 16–25 and 33–42; these read EARTSSDPKR and TTEKNRRNTT. Residues 16–42 form a disordered region; it reads EARTSSDPKRSNGVSRYTTEKNRRNTT.

It belongs to the bacterial ribosomal protein bL33 family.

The protein is Large ribosomal subunit protein bL33 of Prochlorococcus marinus (strain MIT 9301).